The following is a 204-amino-acid chain: Large ribosomal subunit protein eL15 (204 aa).

Belongs to the eukaryotic ribosomal protein eL15 family. As to quaternary structure, component of the large ribosomal subunit.

It localises to the cytoplasm. Functionally, component of the large ribosomal subunit. The ribosome is a large ribonucleoprotein complex responsible for the synthesis of proteins in the cell. This chain is Large ribosomal subunit protein eL15 (rpl15), found in Cyprinus carpio (Common carp).